The primary structure comprises 310 residues: Phytoene synthase 2, chloroplastic (310 aa).

Residues 1-25 (DPDIVLPGNLGLLSEAYDRCGEVCA) constitute a chloroplast transit peptide.

This sequence belongs to the phytoene/squalene synthase family. Monomer.

The protein resides in the plastid. Its subcellular location is the chloroplast. It carries out the reaction 2 (2E,6E,10E)-geranylgeranyl diphosphate = 15-cis-phytoene + 2 diphosphate. It functions in the pathway carotenoid biosynthesis; phytoene biosynthesis; all-trans-phytoene from geranylgeranyl diphosphate: step 1/1. Catalyzes the reaction from prephytoene diphosphate to phytoene. The sequence is that of Phytoene synthase 2, chloroplastic (PSY2) from Solanum lycopersicum (Tomato).